A 180-amino-acid polypeptide reads, in one-letter code: ATP-dependent protease subunit HslV (180 aa).

The active site involves Thr5. Residues Gly161, Cys164, and Thr167 each contribute to the Na(+) site.

It belongs to the peptidase T1B family. HslV subfamily. In terms of assembly, a double ring-shaped homohexamer of HslV is capped on each side by a ring-shaped HslU homohexamer. The assembly of the HslU/HslV complex is dependent on binding of ATP.

The protein resides in the cytoplasm. It carries out the reaction ATP-dependent cleavage of peptide bonds with broad specificity.. Allosterically activated by HslU binding. Its function is as follows. Protease subunit of a proteasome-like degradation complex believed to be a general protein degrading machinery. This is ATP-dependent protease subunit HslV from Campylobacter fetus subsp. fetus (strain 82-40).